We begin with the raw amino-acid sequence, 367 residues long: 3-isopropylmalate dehydrogenase (367 aa).

75–88 contributes to the NAD(+) binding site; sequence GPKWDGIERSKRPE. Residues arginine 95, arginine 105, arginine 133, and aspartate 230 each contribute to the substrate site. Residues aspartate 230, aspartate 254, and aspartate 258 each contribute to the Mg(2+) site. 288–300 is a binding site for NAD(+); that stretch reads GSAPDIAGQDIAN.

The protein belongs to the isocitrate and isopropylmalate dehydrogenases family. LeuB type 1 subfamily. As to quaternary structure, homodimer. Mg(2+) is required as a cofactor. It depends on Mn(2+) as a cofactor.

It localises to the cytoplasm. The catalysed reaction is (2R,3S)-3-isopropylmalate + NAD(+) = 4-methyl-2-oxopentanoate + CO2 + NADH. It participates in amino-acid biosynthesis; L-leucine biosynthesis; L-leucine from 3-methyl-2-oxobutanoate: step 3/4. Its function is as follows. Catalyzes the oxidation of 3-carboxy-2-hydroxy-4-methylpentanoate (3-isopropylmalate) to 3-carboxy-4-methyl-2-oxopentanoate. The product decarboxylates to 4-methyl-2 oxopentanoate. In Psychrobacter arcticus (strain DSM 17307 / VKM B-2377 / 273-4), this protein is 3-isopropylmalate dehydrogenase.